The sequence spans 525 residues: MTTPVCISQAFMDSFHAHHAQLLGKRVWLACSGGRDSLGLALLCRTLFDQGRLPFLPQLIHVNHGMQAANDEWAQQVAQWAQQHDMACQIIGLNLTHKSEQAARDGRYQAMMQLMNQDDVLILGHHQDDQVETLLMRLFNGAGVTGLGAMREWTSKQAHTAQSPPDVNKPRQRIFLWRPWLEISRDQITEYAQRHNLKYIDDPTNVAQSPSKLALQTLNDRAWLRSVLLPHITERYPQASEAMARTAQLMQQASDSIDEQVTQDLAQVALAATEQQSVIALDKLAGLSAPRQAALIHHWLAPYPNQLPPSKRLVDEVLALSFRQDSNHQTCLYFDAGSEQYQVRRYQNKLYRLQHAYAQWLQMMPHQIHLPLAHNAEELSLNLADTDVLSLKQSGLEFDWQLTGVRGLMAHLARLLNSADAKVTPCQLIFEPLPRTIKLALAGRSGRKSGKKLLQALDQPSFMRGSVVLCRLDMMGSDGILQDSSTAVPLFIICIDRIWVLQSQFTALINQLLATEVLSTQILEC.

32–37 (SGGRDS) contributes to the ATP binding site.

It belongs to the tRNA(Ile)-lysidine synthase family.

The protein localises to the cytoplasm. It catalyses the reaction cytidine(34) in tRNA(Ile2) + L-lysine + ATP = lysidine(34) in tRNA(Ile2) + AMP + diphosphate + H(+). Functionally, ligates lysine onto the cytidine present at position 34 of the AUA codon-specific tRNA(Ile) that contains the anticodon CAU, in an ATP-dependent manner. Cytidine is converted to lysidine, thus changing the amino acid specificity of the tRNA from methionine to isoleucine. This is tRNA(Ile)-lysidine synthase from Psychrobacter sp. (strain PRwf-1).